The sequence spans 274 residues: Cytochrome b-c1 complex subunit Rieske, mitochondrial (274 aa).

Residues 79–103 lie on the Mitochondrial matrix side of the membrane; the sequence is SHTDVKVPDFYDYRRLEVLDSTKSS. A helical transmembrane segment spans residues 104–140; sequence RESSEARKGFSYLVTAVTTVGVAYAAKNAVTQFISSM. Topologically, residues 141–274 are mitochondrial intermembrane; sequence SASADVLAMA…FTSDDMVVVG (134 aa). The Rieske domain occupies 187-272; the sequence is EAAVELSQLR…YEFTSDDMVV (86 aa). Residues Cys-217, His-219, Cys-236, His-239, and Ser-241 each contribute to the [2Fe-2S] cluster site. Cys-222 and Cys-238 are disulfide-bonded.

Belongs to the Rieske iron-sulfur protein family. As to quaternary structure, component of the ubiquinol-cytochrome c oxidoreductase (cytochrome b-c1 complex, complex III, CIII), a multisubunit enzyme composed of 11 subunits. The complex is composed of 3 respiratory subunits cytochrome b, cytochrome c1 and Rieske protein UQCRFS1, 2 core protein subunits UQCRC1/QCR1 and UQCRC2/QCR2, and 6 low-molecular weight protein subunits UQCRH/QCR6, UQCRB/QCR7, UQCRQ/QCR8, UQCR10/QCR9, UQCR11/QCR10 and subunit 9, the cleavage product of Rieske protein UQCRFS1. The complex exists as an obligatory dimer and forms supercomplexes (SCs) in the inner mitochondrial membrane with NADH-ubiquinone oxidoreductase (complex I, CI) and cytochrome c oxidase (complex IV, CIV), resulting in different assemblies (supercomplex SCI(1)III(2)IV(1) and megacomplex MCI(2)III(2)IV(2)). Incorporation of the Rieske protein UQCRFS1 is the penultimate step in complex III assembly. Interacts with TTC19, which is involved in the clearance of UQCRFS1 fragments. In terms of assembly, component of the ubiquinol-cytochrome c oxidoreductase (cytochrome b-c1 complex, complex III, CIII). Subunit 9 corresponds to the mitochondrial targeting sequence (MTS) of Rieske protein UQCRFS1. It is retained after processing and incorporated inside complex III, where it remains bound to the complex and localizes between the 2 core subunits UQCRC1/QCR1 and UQCRC2/QCR2. [2Fe-2S] cluster is required as a cofactor. Post-translationally, proteolytic processing is necessary for the correct insertion of UQCRFS1 in the complex III dimer. Several fragments are generated during UQCRFS1 insertion, most probably due to the endogenous matrix-processing peptidase (MPP) activity of the 2 core protein subunits UQCRC1/QCR1 and UQCRC2/QCR2, which are homologous to the 2 mitochondrial-processing peptidase (MPP) subunits beta-MPP and alpha-MPP respectively. The action of the protease is also necessary for the clearance of the UQCRFS1 fragments.

Its subcellular location is the mitochondrion inner membrane. The catalysed reaction is a quinol + 2 Fe(III)-[cytochrome c](out) = a quinone + 2 Fe(II)-[cytochrome c](out) + 2 H(+)(out). Functionally, component of the ubiquinol-cytochrome c oxidoreductase, a multisubunit transmembrane complex that is part of the mitochondrial electron transport chain which drives oxidative phosphorylation. The respiratory chain contains 3 multisubunit complexes succinate dehydrogenase (complex II, CII), ubiquinol-cytochrome c oxidoreductase (cytochrome b-c1 complex, complex III, CIII) and cytochrome c oxidase (complex IV, CIV), that cooperate to transfer electrons derived from NADH and succinate to molecular oxygen, creating an electrochemical gradient over the inner membrane that drives transmembrane transport and the ATP synthase. The cytochrome b-c1 complex catalyzes electron transfer from ubiquinol to cytochrome c, linking this redox reaction to translocation of protons across the mitochondrial inner membrane, with protons being carried across the membrane as hydrogens on the quinol. In the process called Q cycle, 2 protons are consumed from the matrix, 4 protons are released into the intermembrane space and 2 electrons are passed to cytochrome c. The Rieske protein is a catalytic core subunit containing a [2Fe-2S] iron-sulfur cluster. It cycles between 2 conformational states during catalysis to transfer electrons from the quinol bound in the Q(0) site in cytochrome b to cytochrome c1. Incorporation of UQCRFS1 is the penultimate step in complex III assembly. In terms of biological role, component of the ubiquinol-cytochrome c oxidoreductase (cytochrome b-c1 complex, complex III, CIII). UQCRFS1 undergoes proteolytic processing once it is incorporated in the complex III dimer. One of the fragments, called subunit 9, corresponds to its mitochondrial targeting sequence (MTS). The proteolytic processing is necessary for the correct insertion of UQCRFS1 in the complex III dimer, but the persistence of UQCRFS1-derived fragments may prevent newly imported UQCRFS1 to be processed and assembled into complex III and is detrimental for the complex III structure and function. This is Cytochrome b-c1 complex subunit Rieske, mitochondrial (UQCRFS1) from Theropithecus gelada (Gelada baboon).